Reading from the N-terminus, the 199-residue chain is Probable molybdenum cofactor guanylyltransferase (199 aa).

GTP-binding positions include 8–10 (LAG), Lys-20, Asp-65, and Asp-96. Asp-96 serves as a coordination point for Mg(2+).

Belongs to the MobA family. It depends on Mg(2+) as a cofactor.

The protein resides in the cytoplasm. It catalyses the reaction Mo-molybdopterin + GTP + H(+) = Mo-molybdopterin guanine dinucleotide + diphosphate. In terms of biological role, transfers a GMP moiety from GTP to Mo-molybdopterin (Mo-MPT) cofactor (Moco or molybdenum cofactor) to form Mo-molybdopterin guanine dinucleotide (Mo-MGD) cofactor. In Bacillus subtilis (strain 168), this protein is Probable molybdenum cofactor guanylyltransferase.